The following is a 298-amino-acid chain: UDP-N-acetylenolpyruvoylglucosamine reductase (298 aa).

The region spanning K26 to G191 is the FAD-binding PCMH-type domain. The active site involves R170. S220 (proton donor) is an active-site residue. The active site involves E290.

This sequence belongs to the MurB family. FAD is required as a cofactor.

The protein resides in the cytoplasm. It carries out the reaction UDP-N-acetyl-alpha-D-muramate + NADP(+) = UDP-N-acetyl-3-O-(1-carboxyvinyl)-alpha-D-glucosamine + NADPH + H(+). Its pathway is cell wall biogenesis; peptidoglycan biosynthesis. Functionally, cell wall formation. The chain is UDP-N-acetylenolpyruvoylglucosamine reductase from Lactobacillus acidophilus (strain ATCC 700396 / NCK56 / N2 / NCFM).